A 545-amino-acid polypeptide reads, in one-letter code: Endo-beta-N-acetylglucosaminidase (545 aa).

Residues 1-36 (MTFIKQMMPRYVASMTAGIVAAAMAATCAFAPVANA) form the signal peptide. One can recognise a GH18 domain in the interval 51–333 (RHFMVYYRAW…EDLRRIVPSN (283 aa)). The active-site Proton donor is the glutamate 184. Residues 486–511 (PVPTPDSTDQNGNRDKVTNHKVQGQP) are disordered. The helical transmembrane segment at 518-538 (GISTDIIVAVGVTLAIAGVAL) threads the bilayer.

This sequence belongs to the glycosyl hydrolase 18 family.

The protein localises to the cell membrane. The catalysed reaction is an N(4)-(oligosaccharide-(1-&gt;3)-[oligosaccharide-(1-&gt;6)]-beta-D-Man-(1-&gt;4)-beta-D-GlcNAc-(1-&gt;4)-alpha-D-GlcNAc)-L-asparaginyl-[protein] + H2O = an oligosaccharide-(1-&gt;3)-[oligosaccharide-(1-&gt;6)]-beta-D-Man-(1-&gt;4)-D-GlcNAc + N(4)-(N-acetyl-beta-D-glucosaminyl)-L-asparaginyl-[protein]. In terms of biological role, endoglycosidase with broad specificity that cleaves the chitobiose core of high mannose and complex N-linked glycans. Is able to release N-glycans from diverse host glycoproteins such as human and bovine lactoferrin, immunoglobulins A and G, and ribonuclease B. Is active directly on human breast milk - a complex matrix of lipids, oligosaccharides, and proteins with disparate glycosylation types - successfully removing a significant proportion of the total amount of N-glycans. Does not recognize O-linked glycans or free human milk oligosaccharides (HMO). The polypeptide is Endo-beta-N-acetylglucosaminidase (Bifidobacterium longum subsp. infantis (strain ATCC 15697 / DSM 20088 / JCM 1222 / NCTC 11817 / S12)).